Here is a 168-residue protein sequence, read N- to C-terminus: Peptide deformylase (168 aa).

2 residues coordinate Fe cation: cysteine 92 and histidine 134. Glutamate 135 is a catalytic residue. Histidine 138 contributes to the Fe cation binding site.

It belongs to the polypeptide deformylase family. Requires Fe(2+) as cofactor.

It catalyses the reaction N-terminal N-formyl-L-methionyl-[peptide] + H2O = N-terminal L-methionyl-[peptide] + formate. Functionally, removes the formyl group from the N-terminal Met of newly synthesized proteins. Requires at least a dipeptide for an efficient rate of reaction. N-terminal L-methionine is a prerequisite for activity but the enzyme has broad specificity at other positions. The protein is Peptide deformylase of Stutzerimonas stutzeri (strain A1501) (Pseudomonas stutzeri).